The chain runs to 516 residues: Probable inactive beta-glucosidase 14 (516 aa).

The signal sequence occupies residues methionine 1 to alanine 23. A beta-D-glucoside-binding positions include glutamine 43, histidine 145, and asparagine 190–glutamine 191. Asparagine 193 carries an N-linked (GlcNAc...) asparagine glycan. A disulfide bridge connects residues cysteine 210 and cysteine 217. 2 N-linked (GlcNAc...) asparagine glycosylation sites follow: asparagine 221 and asparagine 270. Tyrosine 334 is an a beta-D-glucoside binding site. Cysteine 342 and cysteine 347 form a disulfide bridge. Residue glutamate 405 coordinates a beta-D-glucoside. Glutamate 405 acts as the Nucleophile in catalysis. Asparagine 415 and asparagine 423 each carry an N-linked (GlcNAc...) asparagine glycan. Residues tryptophan 454, glutamate 461–tryptophan 462, and phenylalanine 470 each bind a beta-D-glucoside.

Belongs to the glycosyl hydrolase 1 family. In terms of tissue distribution, expressed in flowers and endosperm.

The polypeptide is Probable inactive beta-glucosidase 14 (Oryza sativa subsp. japonica (Rice)).